Consider the following 156-residue polypeptide: tRNA (cytidine(34)-2'-O)-methyltransferase (156 aa).

S-adenosyl-L-methionine-binding residues include glycine 100, isoleucine 122, and serine 130.

It belongs to the class IV-like SAM-binding methyltransferase superfamily. RNA methyltransferase TrmH family. TrmL subfamily. Homodimer.

The protein localises to the cytoplasm. The catalysed reaction is cytidine(34) in tRNA + S-adenosyl-L-methionine = 2'-O-methylcytidine(34) in tRNA + S-adenosyl-L-homocysteine + H(+). It catalyses the reaction 5-carboxymethylaminomethyluridine(34) in tRNA(Leu) + S-adenosyl-L-methionine = 5-carboxymethylaminomethyl-2'-O-methyluridine(34) in tRNA(Leu) + S-adenosyl-L-homocysteine + H(+). Methylates the ribose at the nucleotide 34 wobble position in the two leucyl isoacceptors tRNA(Leu)(CmAA) and tRNA(Leu)(cmnm5UmAA). Catalyzes the methyl transfer from S-adenosyl-L-methionine to the 2'-OH of the wobble nucleotide. The chain is tRNA (cytidine(34)-2'-O)-methyltransferase from Aeromonas hydrophila subsp. hydrophila (strain ATCC 7966 / DSM 30187 / BCRC 13018 / CCUG 14551 / JCM 1027 / KCTC 2358 / NCIMB 9240 / NCTC 8049).